Consider the following 290-residue polypeptide: MASITLTPSEKDIQAFLEHYQTSLAPSKNPYIRYFLKLPQATVSIYTSGKILLQGEGAEKYASFFGYQAVEQTSGQNLPLIGTDEVGNGSYFGGLAVVAAFVTPDQHDFLRKLGVGDSKTLTDQKIRQIAPILKEKIQHQALLLSPSKYNEVIGDRYNAVSVKVALHNQAIYLLLQKGVQPEKIVIDAFTSAKNYDKYLAQEANRFSNSISLEEKAEGKYLAVAVSSVIARDLFLENLENLGRELGYQLPSGAGTASDKVASQILQAYGMQGLNFCAKLHFKNTEKAKNA.

In terms of domain architecture, RNase H type-2 spans 78–290 (LPLIGTDEVG…FKNTEKAKNA (213 aa)). Residues Asp-84, Glu-85, and Asp-187 each coordinate a divalent metal cation.

This sequence belongs to the RNase HII family. RnhC subfamily. It depends on Mn(2+) as a cofactor. Requires Mg(2+) as cofactor.

The protein resides in the cytoplasm. The catalysed reaction is Endonucleolytic cleavage to 5'-phosphomonoester.. Endonuclease that specifically degrades the RNA of RNA-DNA hybrids. The polypeptide is Ribonuclease HIII (Streptococcus pneumoniae (strain P1031)).